A 199-amino-acid chain; its full sequence is TATA-box-binding protein (199 aa).

2 tandem repeats follow at residues 10 to 86 (IENI…VKLL) and 101 to 177 (IQNI…YNQL).

The protein belongs to the TBP family.

General factor that plays a role in the activation of archaeal genes transcribed by RNA polymerase. Binds specifically to the TATA box promoter element which lies close to the position of transcription initiation. The polypeptide is TATA-box-binding protein (Pyrobaculum calidifontis (strain DSM 21063 / JCM 11548 / VA1)).